A 340-amino-acid polypeptide reads, in one-letter code: GTP 3',8-cyclase (340 aa).

The Radical SAM core domain occupies Arg-20–Lys-246. Arg-29 serves as a coordination point for GTP. [4Fe-4S] cluster-binding residues include Cys-36 and Cys-40. Tyr-42 is an S-adenosyl-L-methionine binding site. A [4Fe-4S] cluster-binding site is contributed by Cys-43. A GTP-binding site is contributed by Arg-79. Gly-83 contacts S-adenosyl-L-methionine. Thr-110 is a GTP binding site. Ser-134 provides a ligand contact to S-adenosyl-L-methionine. GTP is bound at residue Lys-171. Position 205 (Met-205) interacts with S-adenosyl-L-methionine. Positions 268 and 271 each coordinate [4Fe-4S] cluster. Arg-273 to Arg-275 is a binding site for GTP. Cys-285 lines the [4Fe-4S] cluster pocket.

This sequence belongs to the radical SAM superfamily. MoaA family. As to quaternary structure, monomer and homodimer. It depends on [4Fe-4S] cluster as a cofactor.

It catalyses the reaction GTP + AH2 + S-adenosyl-L-methionine = (8S)-3',8-cyclo-7,8-dihydroguanosine 5'-triphosphate + 5'-deoxyadenosine + L-methionine + A + H(+). The protein operates within cofactor biosynthesis; molybdopterin biosynthesis. Its function is as follows. Catalyzes the cyclization of GTP to (8S)-3',8-cyclo-7,8-dihydroguanosine 5'-triphosphate. In Actinobacillus pleuropneumoniae serotype 5b (strain L20), this protein is GTP 3',8-cyclase.